The following is an 89-amino-acid chain: Small ribosomal subunit protein uS15 (89 aa).

It belongs to the universal ribosomal protein uS15 family. Part of the 30S ribosomal subunit. Forms a bridge to the 50S subunit in the 70S ribosome, contacting the 23S rRNA.

Its function is as follows. One of the primary rRNA binding proteins, it binds directly to 16S rRNA where it helps nucleate assembly of the platform of the 30S subunit by binding and bridging several RNA helices of the 16S rRNA. Functionally, forms an intersubunit bridge (bridge B4) with the 23S rRNA of the 50S subunit in the ribosome. The protein is Small ribosomal subunit protein uS15 of Acinetobacter baumannii (strain AB307-0294).